The chain runs to 910 residues: Eukaryotic translation initiation factor 3 subunit C (910 aa).

Residues 1–21 (MSRFFANGSESESESSEEEIQ) form a disordered region. Acidic residues predominate over residues 11 to 20 (SESESSEEEI). A phosphoserine mark is found at Ser-34, Ser-165, Ser-176, and Ser-185. The disordered stretch occupies residues 157-281 (FREAPDQESE…KRAEDDEDGE (125 aa)). Residues 162-186 (DQESEAEDEVVALESDGGDAGDDSD) show a composition bias toward acidic residues. A compositionally biased stretch (low complexity) spans 193–207 (EAAPKAVKSAPAKAA). The span at 209 to 235 (ADDDDSDDSIDWDSDSESETESSDDEN) shows a compositional bias: acidic residues. Basic and acidic residues predominate over residues 240–268 (MRERFLKRTTEKEEKDDDKRKDKRKEQKT). The region spanning 639–815 (FHMHINLELL…ETVGMHRSEP (177 aa)) is the PCI domain. The interval 847 to 910 (FFQRGNMGNR…QQQVQTIDEE (64 aa)) is disordered. The segment covering 862–874 (NRNQNNQGGNWLG) has biased composition (low complexity). Positions 882–891 (RNRNQRGHHK) are enriched in basic residues. Positions 895–910 (DRQQQQQQQVQTIDEE) are enriched in low complexity.

Belongs to the eIF-3 subunit C family. Component of the eukaryotic translation initiation factor 3 (eIF-3) complex. The eIF-3 complex interacts with pix.

It localises to the cytoplasm. Functionally, component of the eukaryotic translation initiation factor 3 (eIF-3) complex, which is involved in protein synthesis of a specialized repertoire of mRNAs and, together with other initiation factors, stimulates binding of mRNA and methionyl-tRNAi to the 40S ribosome. The eIF-3 complex specifically targets and initiates translation of a subset of mRNAs involved in cell proliferation. The polypeptide is Eukaryotic translation initiation factor 3 subunit C (Drosophila sechellia (Fruit fly)).